A 312-amino-acid chain; its full sequence is Ribosomal protein L11 methyltransferase (312 aa).

S-adenosyl-L-methionine-binding residues include Thr162, Gly183, Asp205, and Asn248.

It belongs to the methyltransferase superfamily. PrmA family.

Its subcellular location is the cytoplasm. It carries out the reaction L-lysyl-[protein] + 3 S-adenosyl-L-methionine = N(6),N(6),N(6)-trimethyl-L-lysyl-[protein] + 3 S-adenosyl-L-homocysteine + 3 H(+). Functionally, methylates ribosomal protein L11. The protein is Ribosomal protein L11 methyltransferase of Bacillus cytotoxicus (strain DSM 22905 / CIP 110041 / 391-98 / NVH 391-98).